A 140-amino-acid chain; its full sequence is Small ribosomal subunit protein uS19 (140 aa).

Belongs to the universal ribosomal protein uS19 family.

Functionally, protein S19 forms a complex with S13 that binds strongly to the 16S ribosomal RNA. The polypeptide is Small ribosomal subunit protein uS19 (rps19) (Sulfurisphaera tokodaii (strain DSM 16993 / JCM 10545 / NBRC 100140 / 7) (Sulfolobus tokodaii)).